Here is a 355-residue protein sequence, read N- to C-terminus: Putative arylamide transporter (355 aa).

A run of 6 helical transmembrane segments spans residues 22–42 (TVLW…YLTH), 44–64 (VFNH…MSAT), 71–91 (RAQQ…GVHA), 92–112 (LLGS…SVAV), 119–139 (VAQG…VLVF), and 150–170 (LFDA…LFPP).

The protein localises to the cell membrane. Its function is as follows. May be involved in the import of arylamide compounds. The polypeptide is Putative arylamide transporter (Mycobacterium bovis (strain ATCC BAA-935 / AF2122/97)).